The chain runs to 101 residues: Iron-sulfur cluster assembly protein CyaY (101 aa).

This sequence belongs to the frataxin family.

In terms of biological role, involved in iron-sulfur (Fe-S) cluster assembly. May act as a regulator of Fe-S biogenesis. The sequence is that of Iron-sulfur cluster assembly protein CyaY from Rickettsia felis (strain ATCC VR-1525 / URRWXCal2) (Rickettsia azadi).